The chain runs to 597 residues: Alkyldihydroxyacetonephosphate synthase (597 aa).

The FAD-binding PCMH-type domain occupies 131–313; the sequence is IPRLPDIVVW…SEVTIKIFPI (183 aa). FAD is bound by residues 163-169, 232-238, 245-248, and 297-303; these read PIGGGTS, DSIEFST, TRAS, and EGTLGVV. Residue Arg-444 participates in substrate binding. Tyr-507 serves as the catalytic Proton donor/acceptor. An important for enzyme activity region spans residues 544–546; that stretch reads HHH. Positions 595-597 match the Microbody targeting signal motif; that stretch reads CKL.

The protein belongs to the FAD-binding oxidoreductase/transferase type 4 family. In terms of assembly, homodimer. Requires FAD as cofactor.

The protein resides in the peroxisome. It carries out the reaction a long chain fatty alcohol + a 1-acylglycerone 3-phosphate = a 1-O-alkylglycerone 3-phosphate + a long-chain fatty acid + H(+). It functions in the pathway glycerolipid metabolism; ether lipid biosynthesis. Catalyzes the exchange of an acyl for a long-chain alkyl group and the formation of the ether bond in the biosynthesis of ether phospholipids. The chain is Alkyldihydroxyacetonephosphate synthase (ads-1) from Caenorhabditis elegans.